A 219-amino-acid chain; its full sequence is Ribose-5-phosphate isomerase A (219 aa).

Substrate-binding positions include 28–31 (TGST), 81–84 (DGAD), and 94–97 (KGGG). E103 (proton acceptor) is an active-site residue. K121 is a binding site for substrate.

It belongs to the ribose 5-phosphate isomerase family. In terms of assembly, homodimer.

It carries out the reaction aldehydo-D-ribose 5-phosphate = D-ribulose 5-phosphate. It participates in carbohydrate degradation; pentose phosphate pathway; D-ribose 5-phosphate from D-ribulose 5-phosphate (non-oxidative stage): step 1/1. Catalyzes the reversible conversion of ribose-5-phosphate to ribulose 5-phosphate. This is Ribose-5-phosphate isomerase A from Pectobacterium atrosepticum (strain SCRI 1043 / ATCC BAA-672) (Erwinia carotovora subsp. atroseptica).